We begin with the raw amino-acid sequence, 432 residues long: Adenylosuccinate synthetase (432 aa).

Residues Gly12 to Lys18 and Gly40 to Thr42 each bind GTP. Residue Asp13 is the Proton acceptor of the active site. Positions 13 and 40 each coordinate Mg(2+). Residues Asp13–Lys16, Asn38–His41, Thr132, Arg146, Gln226, Thr241, and Arg305 each bind IMP. The active-site Proton donor is His41. Thr301 to Arg307 contributes to the substrate binding site. GTP-binding positions include Arg307, Lys333 to Asp335, and Ser415 to Ser417.

Belongs to the adenylosuccinate synthetase family. In terms of assembly, homodimer. It depends on Mg(2+) as a cofactor.

Its subcellular location is the cytoplasm. It catalyses the reaction IMP + L-aspartate + GTP = N(6)-(1,2-dicarboxyethyl)-AMP + GDP + phosphate + 2 H(+). It functions in the pathway purine metabolism; AMP biosynthesis via de novo pathway; AMP from IMP: step 1/2. Functionally, plays an important role in the de novo pathway of purine nucleotide biosynthesis. Catalyzes the first committed step in the biosynthesis of AMP from IMP. This Rhizobium etli (strain ATCC 51251 / DSM 11541 / JCM 21823 / NBRC 15573 / CFN 42) protein is Adenylosuccinate synthetase.